The sequence spans 222 residues: MKLLIVEDDKLLQEGLLLALSHEGYACDCAGTAKEADALIGSAHYSLVILDLGLPDDDGLALLSRWRKNNYQHPVLILTARDKVDDRVSGLDVGADDYLAKPFALTELQARVRALIRRNQGSSNSKIQVDNITLDLNNQQVLLDEKPVVLTPKEFAILSRLVLKAGYQVHRELLHQDIYAWNDDPSSNSLEVHIHNLRQKIGKDRIRTLRGFGYLLTKGEQP.

A Response regulatory domain is found at 2–116 (KLLIVEDDKL…ELQARVRALI (115 aa)). A 4-aspartylphosphate modification is found at Asp-51. The segment at residues 124-218 (NSKIQVDNIT…LRGFGYLLTK (95 aa)) is a DNA-binding region (ompR/PhoB-type).

Phosphorylated by PmrB.

The protein resides in the cytoplasm. In terms of biological role, member of the two-component regulatory system PmrB/PmrA involved in regulation of virulence. Unphosphorylated PmrA represses extracellular enzyme genes. Phosphorylation of PmrA by PmrB relieves such repression, which leads to activation of extracellular enzyme genes. Phosphorylated PmrA seems to repress expression of the pmrCAB operon. In Pectobacterium parmentieri, this protein is Transcriptional regulatory protein PmrA (pmrA).